Consider the following 35-residue polypeptide: Kappa-theraphotoxin-Gr1b (35 aa).

Disulfide bonds link Cys2/Cys16, Cys9/Cys21, and Cys15/Cys28. The tract at residues 4–6 (YLF) is involved in active face.

It belongs to the neurotoxin 10 (Hwtx-1) family. 09 (HaTx) subfamily. As to expression, expressed by the venom gland.

It is found in the secreted. Its function is as follows. Inhibitor of voltage-gated potassium channels. Inhibits Kv2.1/KCNB1 channels, by shifting activation of the channel to more depolarized voltages. The toxin binding sites may be situated on the S3-S4 extracellular linker of the channel. One, two, three or four toxin molecules may bind the Kv2.1/KCNB1 channel. May need to partition into the membrane in order to bind to the channel. Antibacterial activity is not observed. The protein is Kappa-theraphotoxin-Gr1b of Grammostola rosea (Chilean rose tarantula).